A 383-amino-acid chain; its full sequence is Acetylornithine deacetylase (383 aa).

His-80 serves as a coordination point for Zn(2+). Residue Asp-82 is part of the active site. Asp-112 lines the Zn(2+) pocket. Glu-144 is an active-site residue. Zn(2+)-binding residues include Glu-145, Glu-169, and His-355.

The protein belongs to the peptidase M20A family. ArgE subfamily. As to quaternary structure, homodimer. Zn(2+) serves as cofactor. The cofactor is Co(2+). Requires glutathione as cofactor.

Its subcellular location is the cytoplasm. It carries out the reaction N(2)-acetyl-L-ornithine + H2O = L-ornithine + acetate. It participates in amino-acid biosynthesis; L-arginine biosynthesis; L-ornithine from N(2)-acetyl-L-ornithine (linear): step 1/1. Catalyzes the hydrolysis of the amide bond of N(2)-acetylated L-amino acids. Cleaves the acetyl group from N-acetyl-L-ornithine to form L-ornithine, an intermediate in L-arginine biosynthesis pathway, and a branchpoint in the synthesis of polyamines. This is Acetylornithine deacetylase from Escherichia coli O17:K52:H18 (strain UMN026 / ExPEC).